The sequence spans 396 residues: Elongation factor Tu 1 (396 aa).

Positions 10–206 (KLHVNVGTIG…ALDTFIPDPT (197 aa)) constitute a tr-type G domain. Positions 19-26 (GHVDHGKT) are G1. 19–26 (GHVDHGKT) is a GTP binding site. Residue Thr26 participates in Mg(2+) binding. Residues 60 to 64 (GITIS) are G2. Residues 81-84 (DCPG) are G3. Residues 81–85 (DCPGH) and 136–139 (NKAD) contribute to the GTP site. The interval 136-139 (NKAD) is G4. The segment at 174–176 (SAR) is G5.

This sequence belongs to the TRAFAC class translation factor GTPase superfamily. Classic translation factor GTPase family. EF-Tu/EF-1A subfamily. Monomer.

The protein resides in the cytoplasm. It catalyses the reaction GTP + H2O = GDP + phosphate + H(+). Functionally, GTP hydrolase that promotes the GTP-dependent binding of aminoacyl-tRNA to the A-site of ribosomes during protein biosynthesis. This is Elongation factor Tu 1 from Xanthomonas campestris pv. campestris (strain B100).